The following is a 567-amino-acid chain: Synaptotagmin-like protein 1 (567 aa).

The RabBD domain occupies 31–87 (LLDLSFLTEEEQEAISDVLKRDAHLRQLEEGRVSKLRASLEDPWQLKILTGDWFQEA). The segment at 103-255 (RASIRRKKSP…VSSLNSSTLS (153 aa)) is disordered. Ser120 carries the phosphoserine modification. 2 stretches are compositionally biased toward acidic residues: residues 122 to 135 (GEAE…IEGE) and 170 to 184 (GQEE…ELEA). Polar residues predominate over residues 208–219 (ESQPTPAQSKAT). Ser220 bears the Phosphoserine mark. A compositionally biased stretch (low complexity) spans 235 to 255 (SLDRMLSSSSSVSSLNSSTLS). C2 domains are found at residues 271–390 (VRGS…WLPL) and 403–532 (SRGL…VPWM).

Monomer. Binds NCF2 and NRXN1. Binds RAB27A that has been activated by GTP-binding via its N-terminus. Highly expressed in lung. Detected at lower levels in spleen, liver and kidney, and at very low levels in heart, brain and skeletal muscle. Expressed in cytotoxic T-lymphocytes (CTL).

It is found in the endomembrane system. The protein resides in the cell membrane. Its function is as follows. Binds phosphatidylinositol 3,4,5-trisphosphate. May play a role in vesicle trafficking. Acts as a RAB27A effector protein and may play a role in cytotoxic granule exocytosis in lymphocytes. This is Synaptotagmin-like protein 1 (Sytl1) from Mus musculus (Mouse).